Reading from the N-terminus, the 358-residue chain is Molybdenum import ATP-binding protein ModC (358 aa).

Residues 2–234 enclose the ABC transporter domain; sequence NDDISASFFS…PDLPLAHLEE (233 aa). 34-41 is a binding site for ATP; the sequence is GRSGSGKT. A Mop domain is found at 293 to 358; the sequence is LSSISNCIPV…AQVKSVALID (66 aa).

This sequence belongs to the ABC transporter superfamily. Molybdate importer (TC 3.A.1.8) family. The complex is composed of two ATP-binding proteins (ModC), two transmembrane proteins (ModB) and a solute-binding protein (ModA).

The protein resides in the cell inner membrane. It catalyses the reaction molybdate(out) + ATP + H2O = molybdate(in) + ADP + phosphate + H(+). Part of the ABC transporter complex ModABC involved in molybdenum import. Responsible for energy coupling to the transport system. In Hahella chejuensis (strain KCTC 2396), this protein is Molybdenum import ATP-binding protein ModC.